The chain runs to 366 residues: Chalcone synthase B (366 aa).

Residue cysteine 172 is part of the active site.

This sequence belongs to the thiolase-like superfamily. Chalcone/stilbene synthases family.

The catalysed reaction is (E)-4-coumaroyl-CoA + 3 malonyl-CoA + 3 H(+) = 2',4,4',6'-tetrahydroxychalcone + 3 CO2 + 4 CoA. It functions in the pathway secondary metabolite biosynthesis; flavonoid biosynthesis. Functionally, the primary product of this enzyme is 4,2',4',6'-tetrahydroxychalcone (also termed naringenin-chalcone or chalcone) which can under specific conditions spontaneously isomerize into naringenin. In Ipomoea triloba (Trilobed morning glory), this protein is Chalcone synthase B (CHSB).